A 625-amino-acid chain; its full sequence is tRNA uridine 5-carboxymethylaminomethyl modification enzyme MnmG (625 aa).

FAD is bound at residue 14 to 19; the sequence is GAGHAG. 273-287 lines the NAD(+) pocket; it reads GPRYCPSIEDKIVRF.

This sequence belongs to the MnmG family. In terms of assembly, homodimer. Heterotetramer of two MnmE and two MnmG subunits. FAD is required as a cofactor.

The protein resides in the cytoplasm. Its function is as follows. NAD-binding protein involved in the addition of a carboxymethylaminomethyl (cmnm) group at the wobble position (U34) of certain tRNAs, forming tRNA-cmnm(5)s(2)U34. The sequence is that of tRNA uridine 5-carboxymethylaminomethyl modification enzyme MnmG from Clostridium botulinum (strain Hall / ATCC 3502 / NCTC 13319 / Type A).